Reading from the N-terminus, the 130-residue chain is kinetoplast-associated protein 2-1 (130 aa).

The propeptide occupies 1-10; the sequence is MLRRTVSNFA. The interval 89 to 130 is disordered; the sequence is LTKKWNETKQAQREKAQKAQKKTKSAKSKVKKAAKKSKKSKK. The segment covering 92-105 has biased composition (basic and acidic residues); it reads KWNETKQAQREKAQ. Positions 106–130 are enriched in basic residues; sequence KAQKKTKSAKSKVKKAAKKSKKSKK.

This sequence belongs to the KAP family. In terms of assembly, associates with the kinetoplast DNA network.

The protein localises to the mitochondrion matrix. It localises to the kinetoplast. In terms of biological role, histone H1-like DNA-binding protein involved in the organization and segregation of kinetoplast DNA (kDNA). The mitochondrial DNA of kinetoplastid protozoa consists of about 5,000 minicircles and 20 to 30 maxicircles. These circular DNAs are held together by catenation into a highly organized compact disk structure referred to as a kinetoplast DNA (kDNA) network. Binds preferentially to a specific fragment of minicircle DNA and is able to compact kDNA networks through DNA charge neutralization and condensation. In Crithidia fasciculata, this protein is kinetoplast-associated protein 2-1 (KAP2-1).